The sequence spans 137 residues: Sch210972 biosynthesis cluster protein E (137 aa).

Residues 1–12 (MTKYTSVNSSLP) show a composition bias toward polar residues. A disordered region spans residues 1 to 137 (MTKYTSVNSS…ASTIRPPCCG (137 aa)). Over residues 15-27 (PRQTTPTRPATQT) the composition is skewed to low complexity. Polar residues predominate over residues 51-71 (GSLNGSPTLRTTLDTSLSGTR). Positions 94–109 (DEDHPHDPGPDSDAKK) are enriched in basic and acidic residues.

It functions in the pathway secondary metabolite biosynthesis. Part of the gene cluster that mediates the biosynthesis of the tetramic acid Sch210972, a potential anti-HIV fungal natural product that contains a decalin core. The PKS module of cghG together with the enoylreductase cghC catalyze the formation of the polyketide unit which is then conjugated to 4-hydroxyl-4-methyl glutamate (HMG) by the condensation domain of the cghG NRPS module. One unique structural feature of Sch210972 is the tetramic acid motif proposed to be derived from the non-proteinogenic amino acid HMG, by a Dieckmann-type condensation catalyzed by the reductase domain of cghG. The aldolase cghB catalyzes the aldol condensation of 2 molecules of pyruvic acid to yield the intermediate 4-hydroxyl-4-methyl-2-oxoglutarate (HMOG), which can then be stereoselectively transaminated by an unidentified enzyme to form HMG. The Diels-Alderase cghA then uses the Dieckmann product released by cghG as substrate and catalyzes the Diels-Alder cycloaddition to form the decalin ring of Sch210972. CghA also suppresses the nonenzymatic formation of the alternative stereoisomer. The sequence is that of Sch210972 biosynthesis cluster protein E from Chaetomium globosum (strain ATCC 6205 / CBS 148.51 / DSM 1962 / NBRC 6347 / NRRL 1970) (Soil fungus).